Reading from the N-terminus, the 355-residue chain is UDP-3-O-acylglucosamine N-acyltransferase (355 aa).

The active-site Proton acceptor is His-248.

The protein belongs to the transferase hexapeptide repeat family. LpxD subfamily. In terms of assembly, homotrimer.

It carries out the reaction a UDP-3-O-[(3R)-3-hydroxyacyl]-alpha-D-glucosamine + a (3R)-hydroxyacyl-[ACP] = a UDP-2-N,3-O-bis[(3R)-3-hydroxyacyl]-alpha-D-glucosamine + holo-[ACP] + H(+). It participates in bacterial outer membrane biogenesis; LPS lipid A biosynthesis. Its function is as follows. Catalyzes the N-acylation of UDP-3-O-acylglucosamine using 3-hydroxyacyl-ACP as the acyl donor. Is involved in the biosynthesis of lipid A, a phosphorylated glycolipid that anchors the lipopolysaccharide to the outer membrane of the cell. This is UDP-3-O-acylglucosamine N-acyltransferase from Synechococcus elongatus (strain ATCC 33912 / PCC 7942 / FACHB-805) (Anacystis nidulans R2).